A 349-amino-acid chain; its full sequence is tRNA pseudouridine synthase D (349 aa).

Phenylalanine 27 is a binding site for substrate. Residue aspartate 80 is the Nucleophile of the active site. Asparagine 129 serves as a coordination point for substrate. The 149-residue stretch at glycine 155 to leucine 303 folds into the TRUD domain. Phenylalanine 329 serves as a coordination point for substrate.

This sequence belongs to the pseudouridine synthase TruD family.

It carries out the reaction uridine(13) in tRNA = pseudouridine(13) in tRNA. Responsible for synthesis of pseudouridine from uracil-13 in transfer RNAs. In Escherichia coli (strain SMS-3-5 / SECEC), this protein is tRNA pseudouridine synthase D.